The following is a 308-amino-acid chain: uncharacterized protein (308 aa).

Glu59 is an active-site residue.

This sequence belongs to the PhzF family.

This is an uncharacterized protein from Deinococcus radiodurans (strain ATCC 13939 / DSM 20539 / JCM 16871 / CCUG 27074 / LMG 4051 / NBRC 15346 / NCIMB 9279 / VKM B-1422 / R1).